The following is a 545-amino-acid chain: MSGMWVHPGRTLIWALWVLAAVIKGPAADAPVRSTRLGWVRGKQTTVLGSTVPVNMFLGIPYAAPPLGPLRFKQPKPALPGNDFRNATSYPKLCFQDLEWLVSYQHVLKVRYPKLEASEDCLYLNIYAPAHADNGSNLPVMVWFPGGAFKMGSASSFDGSALAAYEDVLIVTTQYRLGIFGFFDTGDEHARGNWALLDQVAALTWVRDNIEFFGGDPRSVTIFGESAGAISVSSLILSPIANGLFHKAIMESGVAILPLLMRPPGDERKKDLQVLARICGCHASDSAALLQCLRAKPSEELMDISKKLTFSIPVIDDFFFPDEPVALLTQKAFNSVPSIIGVNNHECAFLLSTEFSEILGGSNRSLALYLVHTFLNIPTQYLHLVADHYFYNKHSPVEIRDSFLDLLGDVLFVVPGVVTARYHRDAGAPVYFYEFQHPPQCLNDTRPAFVKADHSDEIRFVFGGAFLKGDIVMFEGATEEEKLLSRKMMRYWANFARTGDPNGEGVPLWPAYTQSEQYLKLDLSVSVGQKLKEQEVEFWMNTIVP.

An N-terminal signal peptide occupies residues 1-28 (MSGMWVHPGRTLIWALWVLAAVIKGPAA). N-linked (GlcNAc...) (complex) asparagine glycosylation is present at N86. A disulfide bridge links C94 with C121. N134 carries an N-linked (GlcNAc...) asparagine glycan. S226 serves as the catalytic Acyl-ester intermediate. Residues C281 and C292 are joined by a disulfide bond. The active-site Charge relay system is the E346. N363 and N443 each carry an N-linked (GlcNAc...) asparagine glycan. H454 acts as the Charge relay system in catalysis.

Belongs to the type-B carboxylesterase/lipase family. Post-translationally, N-glycosylated; contains a fucosylated complex carbohydrate. As to expression, present at high level in urine. Expressed in the kidney proximal straight tubular cells and is secreted from the apical compartment of the cells into the urine (at protein level). In mature cats, it is present at higher level in intact males than in castrated males or in intact or spayed females.

The protein localises to the secreted. It catalyses the reaction a carboxylic ester + H2O = an alcohol + a carboxylate + H(+). Its function is as follows. Carboxylesterase present at high level in urine that regulates production of felinine, a probable pheromone precursor. Probably acts by hydrolyzing the peptide bond of the felinine precursor 3-methylbutanol cyteinylglycine, producing felinine and glycine in cat urine. This chain is Carboxylesterase 5A (CES5A), found in Felis catus (Cat).